Reading from the N-terminus, the 106-residue chain is Urease subunit beta (106 aa).

This sequence belongs to the urease beta subunit family. In terms of assembly, heterotrimer of UreA (gamma), UreB (beta) and UreC (alpha) subunits. Three heterotrimers associate to form the active enzyme.

The protein resides in the cytoplasm. It carries out the reaction urea + 2 H2O + H(+) = hydrogencarbonate + 2 NH4(+). The protein operates within nitrogen metabolism; urea degradation; CO(2) and NH(3) from urea (urease route): step 1/1. This chain is Urease subunit beta, found in Acinetobacter baumannii (strain ATCC 17978 / DSM 105126 / CIP 53.77 / LMG 1025 / NCDC KC755 / 5377).